Here is a 231-residue protein sequence, read N- to C-terminus: MSNTPIELKGSSFTLSVVHLHEAEPKVIHQALEDKIAQAPAFLKHAPVVLNVSALEDPVNWSAMHKAVSATGLRVIGVSGCKDAQLKAEIEKMGLPILTEGKEKAPRPAPTPQAPAQNTTPVTKTRLIDTPVRSGQRIYAPQCDLIVTSHVSAGAELIADGNIHVYGMMRGRALAGASGDRETQIFCTNLMAELVSIAGEYWLSDQIPAEFYGKAARLQLVENALTVQPLN.

The segment at 101–125 (GKEKAPRPAPTPQAPAQNTTPVTKT) is disordered. A compositionally biased stretch (low complexity) spans 114–123 (APAQNTTPVT).

This sequence belongs to the MinC family. In terms of assembly, interacts with MinD and FtsZ.

In terms of biological role, cell division inhibitor that blocks the formation of polar Z ring septums. Rapidly oscillates between the poles of the cell to destabilize FtsZ filaments that have formed before they mature into polar Z rings. Prevents FtsZ polymerization. The chain is Probable septum site-determining protein MinC from Escherichia coli (strain ATCC 8739 / DSM 1576 / NBRC 3972 / NCIMB 8545 / WDCM 00012 / Crooks).